We begin with the raw amino-acid sequence, 65 residues long: Sec-independent protein translocase protein TatA (65 aa).

The helical transmembrane segment at 9-29 threads the bilayer; that stretch reads ILIIVLLVVVVFGIGKLPQVG. The interval 43–65 is disordered; the sequence is SSGEEEKEEVETKEETKTIEKSE. Over residues 45–54 the composition is skewed to acidic residues; it reads GEEEKEEVET. Residues 55–65 show a composition bias toward basic and acidic residues; sequence KEETKTIEKSE.

It belongs to the TatA/E family. In terms of assembly, forms a complex with TatC.

The protein localises to the cell membrane. Functionally, part of the twin-arginine translocation (Tat) system that transports large folded proteins containing a characteristic twin-arginine motif in their signal peptide across membranes. TatA could form the protein-conducting channel of the Tat system. The sequence is that of Sec-independent protein translocase protein TatA from Dehalococcoides mccartyi (strain ATCC BAA-2266 / KCTC 15142 / 195) (Dehalococcoides ethenogenes (strain 195)).